The following is a 352-amino-acid chain: MTTSKPHEENLSPLSYRAAGVDIDAGERLVENIRPYAKRTLRPEVLAGIGGFGALFEISRKFNNPVLVAGTDGVGTKLKLAFESGRHDTVGIDLVAMSVNDILVQGAEPLFFLDYFACGKLDVDTATLVVKGIAAGCEQAGCALIGGETAEMPGMYPEGEYDLAGFAVGAVEKDRIITGTTIKAGDAVLGLASSGAHSNGYSLIRKIIEKNNVDLSADFHGRALIDVIMAPTRIYVKPLLELMRQVPVKGMAHITGGGLLENIPRILPEGVTAVLKKETWEMPPLFAWLQREGNVADNEMHRVFNCGIGMAVVVAPEYIDAAAQLLQSKGEIAWRIGTIREQRADEPRTILE.

It belongs to the AIR synthase family.

It is found in the cytoplasm. The enzyme catalyses 2-formamido-N(1)-(5-O-phospho-beta-D-ribosyl)acetamidine + ATP = 5-amino-1-(5-phospho-beta-D-ribosyl)imidazole + ADP + phosphate + H(+). It participates in purine metabolism; IMP biosynthesis via de novo pathway; 5-amino-1-(5-phospho-D-ribosyl)imidazole from N(2)-formyl-N(1)-(5-phospho-D-ribosyl)glycinamide: step 2/2. This is Phosphoribosylformylglycinamidine cyclo-ligase from Nitrosospira multiformis (strain ATCC 25196 / NCIMB 11849 / C 71).